We begin with the raw amino-acid sequence, 506 residues long: Sodium-coupled neutral amino acid symporter 2 (506 aa).

Residues 1 to 23 (MKKAEMGRFNISPDEDSSSYSSN) are disordered. The Cytoplasmic portion of the chain corresponds to 1 to 76 (MKKAEMGRFN…HPGTTSFGMS (76 aa)). The segment at 1–96 (MKKAEMGRFN…SGILGLSYAM (96 aa)) is regulates protein turnover upon amino acid deprivation. 4 positions are modified to phosphoserine: Ser-12, Ser-21, Ser-22, and Ser-55. The helical transmembrane segment at 77–96 (VFNLSNAIVGSGILGLSYAM) threads the bilayer. Asn-82 is a Na(+) binding site. Residues 97–102 (ANTGIA) are Extracellular-facing. A helical transmembrane segment spans residues 103-123 (LFIILLTFVSIFSLYSVHLLL). Residues 124–158 (KTANEGGSLLYEQLGHKAFGMVGKLTASGSITMQN) lie on the Cytoplasmic side of the membrane. A helical transmembrane segment spans residues 159–177 (IGAMSSYLFIVKYELPLVI). At 178 to 188 (QALMNIEDTNG) the chain is on the extracellular side. A helical membrane pass occupies residues 189 to 209 (LWYLNGDYLVLLVSLVLILPL). At 210–217 (SLLRNLGY) the chain is on the cytoplasmic side. The chain crosses the membrane as a helical span at residues 218–238 (LGYTSGLSLLCMMFFLIVVIF). At 239-292 (KKFQISCPAEIAFLVNETVNSSLTQPATFLPDMGFNRTESDSCQPRYFIFNSQT) the chain is on the extracellular side. Residues Cys-245 and Cys-281 are joined by a disulfide bond. Residues Asn-258 and Asn-274 are each glycosylated (N-linked (GlcNAc...) asparagine). A helical transmembrane segment spans residues 293–313 (VYAVPILTFSFVCHPAILPIY). Topologically, residues 314–329 (EELKGRSRRRMMNVSK) are cytoplasmic. The chain crosses the membrane as a helical span at residues 330–350 (ISFFAMFLMYLLAALFGYLTF). Over 351-371 (YGHVESELLHTYSSVMETDIL) the chain is Extracellular. Residues 372–392 (LLIVRLAVLVAVTLTVPVVIF) form a helical membrane-spanning segment. Thr-386 is a binding site for Na(+). The Cytoplasmic portion of the chain corresponds to 393–413 (PIRSSITHLLCASKEFSWWRH). Residues 414–434 (SVITVSILVFTNLLVIFVPNI) traverse the membrane as a helical segment. Residues 435–436 (RD) lie on the Extracellular side of the membrane. The helical transmembrane segment at 437–457 (IFGFIGASAAAMLIFILPSAF) threads the bilayer. Residues 458 to 472 (YIKLVKKEPMKSVQK) are Cytoplasmic-facing. The chain crosses the membrane as a helical span at residues 473 to 495 (IGAMFFLLSGIVVMTGSMALIVL). Residues 496 to 506 (DWVHNAPGGGH) are Extracellular-facing.

The protein belongs to the amino acid/polyamine transporter 2 family. In terms of processing, polyubiquitination by NEDD4L regulates the degradation and the activity of SLC38A2.

The protein localises to the cell membrane. The catalysed reaction is L-alanine(in) + Na(+)(in) = L-alanine(out) + Na(+)(out). The enzyme catalyses glycine(in) + Na(+)(in) = glycine(out) + Na(+)(out). It carries out the reaction L-serine(in) + Na(+)(in) = L-serine(out) + Na(+)(out). It catalyses the reaction L-proline(in) + Na(+)(in) = L-proline(out) + Na(+)(out). The catalysed reaction is L-methionine(in) + Na(+)(in) = L-methionine(out) + Na(+)(out). The enzyme catalyses L-histidine(in) + Na(+)(in) = L-histidine(out) + Na(+)(out). It carries out the reaction L-asparagine(in) + Na(+)(in) = L-asparagine(out) + Na(+)(out). It catalyses the reaction L-glutamine(in) + Na(+)(in) = L-glutamine(out) + Na(+)(out). The catalysed reaction is L-threonine(in) + Na(+)(in) = L-threonine(out) + Na(+)(out). The enzyme catalyses L-leucine(in) + Na(+)(in) = L-leucine(out) + Na(+)(out). It carries out the reaction L-phenylalanine(in) + Na(+)(in) = L-phenylalanine(out) + Na(+)(out). Inhibited by N-methyl-D-glucamine. Inhibited by choline. Allosteric regulation of sodium ions binding by pH. Its function is as follows. Symporter that cotransports neutral amino acids and sodium ions from the extracellular to the intracellular side of the cell membrane. The transport is pH-sensitive, Li(+)-intolerant, electrogenic, driven by the Na(+) electrochemical gradient and cotransports of neutral amino acids and sodium ions with a stoichiometry of 1:1. May function in the transport of amino acids at the blood-brain barrier. May function in the transport of amino acids in the supply of maternal nutrients to the fetus through the placenta. Maintains a key metabolic glutamine/glutamate balance underpinning retrograde signaling by dendritic release of the neurotransmitter glutamate. Transports L-proline in differentiating osteoblasts for the efficient synthesis of proline-enriched proteins and provides proline essential for osteoblast differentiation and bone formation during bone development. The protein is Sodium-coupled neutral amino acid symporter 2 of Bos taurus (Bovine).